The following is a 123-amino-acid chain: Large ribosomal subunit protein uL14 (123 aa).

Belongs to the universal ribosomal protein uL14 family. Part of the 50S ribosomal subunit. Forms a cluster with proteins L3 and L19. In the 70S ribosome, L14 and L19 interact and together make contacts with the 16S rRNA in bridges B5 and B8.

In terms of biological role, binds to 23S rRNA. Forms part of two intersubunit bridges in the 70S ribosome. The polypeptide is Large ribosomal subunit protein uL14 (Buchnera aphidicola subsp. Acyrthosiphon kondoi (Acyrthosiphon kondoi symbiotic bacterium)).